Reading from the N-terminus, the 407-residue chain is MESRVLSSGATAISGVPRLTKPAGRITTTTVAVAFPARLNATGGNVVWGRQLRPSLLNLDHSSPVSLVTKPVKRDVLKPCSATASDSAGDAAPVGFLAKYPFLVTGFFFFMWYFLNVIFNILNKKIYNYFPYPYFVSVIHLAVGVVYCLGSWTVGLPKRAPVDSNILKLLIPVGFCHALGHVTSNVSFAAVAVSFTHTIKALEPFFNAAASQFVLGQSIPISLWLSLAPVVIGVSMASLTELSFNWLGFISAMISNISFTYRSIYSKKAMTDMDSTNLYAYISIIALLFCIPPAVLFEGPQLLKHGFNDAIAKVGMIKFISDLFWVGMFYHLYNQIATNTLERVAPLTHAVGNVLKRVFVIGFSIIVFGNKISTQTAIGTSIAIAGVAIYSLIKARIEEEKRRMKSA.

The transit peptide at 1-81 (MESRVLSSGA…VKRDVLKPCS (81 aa)) directs the protein to the chloroplast. Topologically, residues 82–101 (ATASDSAGDAAPVGFLAKYP) are chloroplast intermembrane. Residues 102 to 122 (FLVTGFFFFMWYFLNVIFNIL) form a helical membrane-spanning segment. Over 123–134 (NKKIYNYFPYPY) the chain is Lumenal. The helical transmembrane segment at 135-155 (FVSVIHLAVGVVYCLGSWTVG) threads the bilayer. Residues 156–212 (LPKRAPVDSNILKLLIPVGFCHALGHVTSNVSFAAVAVSFTHTIKALEPFFNAAASQ) are Chloroplast intermembrane-facing. The chain crosses the membrane as a helical span at residues 213–233 (FVLGQSIPISLWLSLAPVVIG). The Lumenal segment spans residues 234–277 (VSMASLTELSFNWLGFISAMISNISFTYRSIYSKKAMTDMDSTN). A helical membrane pass occupies residues 278-297 (LYAYISIIALLFCIPPAVLF). Residues 298 to 375 (EGPQLLKHGF…IVFGNKISTQ (78 aa)) are Chloroplast intermembrane-facing. A helical membrane pass occupies residues 376–396 (TAIGTSIAIAGVAIYSLIKAR). Residues 397-407 (IEEEKRRMKSA) lie on the Lumenal side of the membrane.

It belongs to the TPT transporter family. TPT (TC 2.A.7.9) subfamily. Homodimer.

The protein localises to the plastid. The protein resides in the chloroplast membrane. Mediates the export of fixed carbons from the chloroplasts into the cytosol in the form of triose phosphates. In addition, it can also bind and transport phosphoenolpyruvate, thereby increasing the photosynthetic efficiency of C4-plants. This Flaveria trinervia (Clustered yellowtops) protein is Triose phosphate/phosphate translocator, chloroplastic (TPT).